The chain runs to 149 residues: Calmodulin-3 (149 aa).

Alanine 2 carries the post-translational modification N-acetylalanine. EF-hand domains lie at 8 to 43 (DQIA…LGQN), 44 to 79 (PTEA…KMKD), 81 to 116 (DSEE…LGEK), and 117 to 149 (LTDE…MMAK). Ca(2+)-binding residues include aspartate 21, aspartate 23, aspartate 25, cysteine 27, glutamate 32, aspartate 57, aspartate 59, asparagine 61, threonine 63, glutamate 68, aspartate 94, aspartate 96, asparagine 98, and glutamate 105. Lysine 116 is subject to N6,N6,N6-trimethyllysine. Ca(2+) contacts are provided by aspartate 130, aspartate 132, aspartate 134, glutamine 136, and glutamate 141.

It belongs to the calmodulin family.

Calmodulin mediates the control of a large number of enzymes, ion channels and other proteins by Ca(2+). Among the enzymes to be stimulated by the calmodulin-Ca(2+) complex are a number of protein kinases and phosphatases. The sequence is that of Calmodulin-3 (CAM3) from Oryza sativa subsp. japonica (Rice).